Reading from the N-terminus, the 388-residue chain is MKKILLLGSGELGKEFVISAQRKGQHVIACDSYAGAPAMQVADEFEVFDMLDGEALERVVEKHHPDIIVPEIEAIRTERLYDFEKEGIQVVPSARAVNFTMNRKAIRDLAAKELGLKTANYFYAKTLDELKEAAAKIGFPCVVKPLMSSSGKGQSLVKSADELEHAWEYGCSGSRGDIRELIIEEFIKFDSEITLLTVTQKNGPTLFCPPIGHVQKGGDYRESFQPAHIDPAHLKEAEEMAEKVTRALTGAGLWGVEFFLSHENGVYFSELSPRPHDTGMVTLAGTQNLNEFELHLRAVLGLPIPGIKQERIGASAVILSPIASQERPQYRGMEEVTKEEDTYLRIFGKPFTRVNRRMGVVLCYAPLNSDLDALRDKAKRIAEKVEVY.

Residues E11–L12 and E71 each bind N(1)-(5-phospho-beta-D-ribosyl)glycinamide. Residues R103, K144, S149–Q154, E184–I187, and E192 each bind ATP. Residues D108–L300 enclose the ATP-grasp domain. The Mg(2+) site is built by E257 and E270. N(1)-(5-phospho-beta-D-ribosyl)glycinamide contacts are provided by residues D277, K349, and R356–R357.

Belongs to the PurK/PurT family. Homodimer.

The catalysed reaction is N(1)-(5-phospho-beta-D-ribosyl)glycinamide + formate + ATP = N(2)-formyl-N(1)-(5-phospho-beta-D-ribosyl)glycinamide + ADP + phosphate + H(+). It functions in the pathway purine metabolism; IMP biosynthesis via de novo pathway; N(2)-formyl-N(1)-(5-phospho-D-ribosyl)glycinamide from N(1)-(5-phospho-D-ribosyl)glycinamide (formate route): step 1/1. Its function is as follows. Involved in the de novo purine biosynthesis. Catalyzes the transfer of formate to 5-phospho-ribosyl-glycinamide (GAR), producing 5-phospho-ribosyl-N-formylglycinamide (FGAR). Formate is provided by PurU via hydrolysis of 10-formyl-tetrahydrofolate. The polypeptide is Formate-dependent phosphoribosylglycinamide formyltransferase (Bacteroides thetaiotaomicron (strain ATCC 29148 / DSM 2079 / JCM 5827 / CCUG 10774 / NCTC 10582 / VPI-5482 / E50)).